The following is an 805-amino-acid chain: Putative cation-transporting ATPase MJ1226 (805 aa).

The next 4 helical transmembrane spans lie at 53 to 73, 75 to 95, 226 to 246, and 258 to 278; these read SYFW…SAII, HWVD…VGFW, IGDY…AVEL, and FALV…LSIT. Aspartate 311 acts as the 4-aspartylphosphate intermediate in catalysis. Helical transmembrane passes span 615–637, 641–663, 680–700, 712–734, 747–769, and 773–790; these read YVIY…ILIL, PITA…AIAY, ILML…LIFY, ELQS…VTRI, LLFW…GIFM, and GWDL…WMLI.

The protein belongs to the cation transport ATPase (P-type) (TC 3.A.3) family. Type IIIA subfamily.

The protein localises to the cell membrane. It catalyses the reaction ATP + H2O = ADP + phosphate + H(+). This Methanocaldococcus jannaschii (strain ATCC 43067 / DSM 2661 / JAL-1 / JCM 10045 / NBRC 100440) (Methanococcus jannaschii) protein is Putative cation-transporting ATPase MJ1226.